Here is a 380-residue protein sequence, read N- to C-terminus: Forkhead box protein F1 (380 aa).

Residues 1–19 (MTAEVQQPSVQTPAHSSPM) are compositionally biased toward polar residues. Residues 1–49 (MTAEVQQPSVQTPAHSSPMTEKPVQTPVMETSSSSSSTKAKKTNAGIRR) are disordered. The segment at residues 52 to 146 (KPPYSYIALI…EEGSFRRRPR (95 aa)) is a DNA-binding region (fork-head).

Its subcellular location is the nucleus. The polypeptide is Forkhead box protein F1 (foxf1) (Danio rerio (Zebrafish)).